Here is a 106-residue protein sequence, read N- to C-terminus: Programmed cell death activator egl-1 (106 aa).

Residues Leu73–Asp81 are BH3-like.

Interacts with ced-9; the interaction results in ced-4 release from the ced-4/ced-9 complex. Interaction with ced-9 may enhance interaction of ced-9 with drp-1, but not with ced-4. A ced-9/egl-1 complex may recruit drp-1 to the mitochondrial surface.

It is found in the synapse. In terms of biological role, plays a major role in programmed cell death (PCD or apoptosis) by negatively regulating ced-9. Binds to and directly inhibits the activity of ced-9, releasing the cell death activator ced-4 from a ced-9/ced-4 containing protein complex and allowing ced-4 to activate the cell-killing caspase ced-3. Required to activate programmed cell death in the sister cells of the serotonergic neurosecretory motor (NSM) neurons during embryogenesis. Required to activate programmed cell death in the sister cells of the M4 motor neuron and I1 pharyngeal neuron during embryogenesis. During larval development, required for the elimination of transient presynaptic components upstream of ced-9, ced-4 and ced-3 apoptotic pathway. Together with ain-1, a component of the miRNA-induced-silencing complex (miRISC), and probably upstream of ced-3 and ced-4, regulates temporal cell fate patterning during larval development. Has been shown in two studies to be dispensable in mitochondrial dynamics and morphology during early embryonic development. However, one study shows that during larval development, egl-1 is involved in modulating mitochondrial dynamics, perhaps acting by stabilizing the interaction between ced-9 and drp-1 in order to promote mitochondrial fission. Involved in inducing mitochondrial fragmentation during apoptosis, probably acting via ced-9 and dynamin-related protein drp-1. This is Programmed cell death activator egl-1 from Caenorhabditis elegans.